Reading from the N-terminus, the 232-residue chain is Protein Mis18-alpha (232 aa).

Residues serine 36, serine 39, and serine 40 each carry the phosphoserine modification. The region spanning 79–177 (PLVFLCSGCR…SVEAIESYVL (99 aa)) is the Mis18 domain. Positions 84, 87, 140, and 143 each coordinate Zn(2+). Residue lysine 161 forms a Glycyl lysine isopeptide (Lys-Gly) (interchain with G-Cter in SUMO2) linkage. The residue at position 232 (serine 232) is a Phosphoserine.

The protein belongs to the mis18 family. In terms of assembly, homodimer, and heterodimer with OIP5/MIS18B. Identified in a complex containing MIS18A, OIP5/MIS18B, MIS18BP1, RBBP7 and RBBP4.

The protein localises to the nucleus. The protein resides in the chromosome. Its subcellular location is the centromere. Required for recruitment of CENPA to centromeres and normal chromosome segregation during mitosis. The polypeptide is Protein Mis18-alpha (MIS18A) (Pan troglodytes (Chimpanzee)).